Reading from the N-terminus, the 250-residue chain is 5-oxoprolinase subunit A (250 aa).

This sequence belongs to the LamB/PxpA family. Forms a complex composed of PxpA, PxpB and PxpC.

It catalyses the reaction 5-oxo-L-proline + ATP + 2 H2O = L-glutamate + ADP + phosphate + H(+). Its function is as follows. Catalyzes the cleavage of 5-oxoproline to form L-glutamate coupled to the hydrolysis of ATP to ADP and inorganic phosphate. The sequence is that of 5-oxoprolinase subunit A from Staphylococcus haemolyticus (strain JCSC1435).